The primary structure comprises 342 residues: Nucleoid-associated protein Shewmr7_2293 (342 aa).

It belongs to the YejK family.

It is found in the cytoplasm. The protein localises to the nucleoid. The sequence is that of Nucleoid-associated protein Shewmr7_2293 from Shewanella sp. (strain MR-7).